A 348-amino-acid polypeptide reads, in one-letter code: Protein RecA (348 aa).

Position 65-72 (65-72 (GPESSGKT)) interacts with ATP.

The protein belongs to the RecA family.

The protein localises to the cytoplasm. In terms of biological role, can catalyze the hydrolysis of ATP in the presence of single-stranded DNA, the ATP-dependent uptake of single-stranded DNA by duplex DNA, and the ATP-dependent hybridization of homologous single-stranded DNAs. It interacts with LexA causing its activation and leading to its autocatalytic cleavage. This chain is Protein RecA, found in Enterococcus gallinarum.